Consider the following 288-residue polypeptide: Pantothenate synthetase (288 aa).

30 to 37 (MGALHEGH) contacts ATP. Catalysis depends on His-37, which acts as the Proton donor. (R)-pantoate is bound at residue Gln-61. A beta-alanine-binding site is contributed by Gln-61. 147 to 150 (GEKD) is an ATP binding site. Residue Gln-153 participates in (R)-pantoate binding. ATP is bound by residues Leu-176 and 184–187 (ISSR).

It belongs to the pantothenate synthetase family. As to quaternary structure, homodimer.

The protein localises to the cytoplasm. It catalyses the reaction (R)-pantoate + beta-alanine + ATP = (R)-pantothenate + AMP + diphosphate + H(+). Its pathway is cofactor biosynthesis; (R)-pantothenate biosynthesis; (R)-pantothenate from (R)-pantoate and beta-alanine: step 1/1. In terms of biological role, catalyzes the condensation of pantoate with beta-alanine in an ATP-dependent reaction via a pantoyl-adenylate intermediate. The protein is Pantothenate synthetase of Prosthecochloris aestuarii (strain DSM 271 / SK 413).